Consider the following 718-residue polypeptide: Catalase-peroxidase (718 aa).

The tryptophyl-tyrosyl-methioninium (Trp-Tyr) (with M-245) cross-link spans 98–219 (WHAAGTYRMG…LAATEMGLIY (122 aa)). The Proton acceptor role is filled by His-99. The segment at residues 219–245 (YVNPEGPQASGDPRSAAPFIRATFGNM) is a cross-link (tryptophyl-tyrosyl-methioninium (Tyr-Met) (with W-98)). His-260 provides a ligand contact to heme b.

Belongs to the peroxidase family. Peroxidase/catalase subfamily. As to quaternary structure, homodimer or homotetramer. It depends on heme b as a cofactor. Formation of the three residue Trp-Tyr-Met cross-link is important for the catalase, but not the peroxidase activity of the enzyme.

The catalysed reaction is H2O2 + AH2 = A + 2 H2O. It carries out the reaction 2 H2O2 = O2 + 2 H2O. Functionally, bifunctional enzyme with both catalase and broad-spectrum peroxidase activity. This chain is Catalase-peroxidase, found in Acinetobacter baumannii (strain ATCC 17978 / DSM 105126 / CIP 53.77 / LMG 1025 / NCDC KC755 / 5377).